The sequence spans 526 residues: GMP synthase [glutamine-hydrolyzing] (526 aa).

The Glutamine amidotransferase type-1 domain occupies 9-208; the sequence is RILILDFGSQ…VKDICGCECL (200 aa). Residue C86 is the Nucleophile of the active site. Catalysis depends on residues H182 and E184. The 193-residue stretch at 209–401 folds into the GMPS ATP-PPase domain; it reads WTPATIIDDA…LGLPYDMLYR (193 aa). 236-242 contacts ATP; the sequence is SGGVDSS.

In terms of assembly, homodimer.

It catalyses the reaction XMP + L-glutamine + ATP + H2O = GMP + L-glutamate + AMP + diphosphate + 2 H(+). It participates in purine metabolism; GMP biosynthesis; GMP from XMP (L-Gln route): step 1/1. In terms of biological role, catalyzes the synthesis of GMP from XMP. The chain is GMP synthase [glutamine-hydrolyzing] from Aeromonas salmonicida (strain A449).